A 203-amino-acid chain; its full sequence is Pyridoxine/pyridoxamine 5'-phosphate oxidase (203 aa).

Residues 50–55 (RMVLLK), 65–66 (YT), K71, K72, and Q94 each bind FMN. Substrate is bound at residue K55. Substrate is bound by residues Y112, R116, and S120. FMN-binding positions include 129 to 130 (QS) and W174. Substrate is bound at residue 180-182 (RLH). FMN is bound at residue R184.

The protein belongs to the pyridoxamine 5'-phosphate oxidase family. As to quaternary structure, homodimer. It depends on FMN as a cofactor.

It catalyses the reaction pyridoxamine 5'-phosphate + O2 + H2O = pyridoxal 5'-phosphate + H2O2 + NH4(+). It carries out the reaction pyridoxine 5'-phosphate + O2 = pyridoxal 5'-phosphate + H2O2. It functions in the pathway cofactor metabolism; pyridoxal 5'-phosphate salvage; pyridoxal 5'-phosphate from pyridoxamine 5'-phosphate: step 1/1. Its pathway is cofactor metabolism; pyridoxal 5'-phosphate salvage; pyridoxal 5'-phosphate from pyridoxine 5'-phosphate: step 1/1. Its function is as follows. Catalyzes the oxidation of either pyridoxine 5'-phosphate (PNP) or pyridoxamine 5'-phosphate (PMP) into pyridoxal 5'-phosphate (PLP). The chain is Pyridoxine/pyridoxamine 5'-phosphate oxidase from Brucella canis (strain ATCC 23365 / NCTC 10854 / RM-666).